The sequence spans 80 residues: Cell division activator CedA (80 aa).

Belongs to the CedA family.

In terms of biological role, activates the cell division inhibited by chromosomal DNA over-replication. In Salmonella typhimurium (strain LT2 / SGSC1412 / ATCC 700720), this protein is Cell division activator CedA.